We begin with the raw amino-acid sequence, 204 residues long: Outer-membrane lipoprotein carrier protein (204 aa).

Positions 1 to 21 (MKKIAIVGALLTSFVASSVWA) are cleaved as a signal peptide. The disordered stretch occupies residues 169 to 204 (QRSSYQLKSQQNGAIDASKFTFTPPQGVTVDDQRNK). Positions 171-181 (SSYQLKSQQNG) are enriched in polar residues.

This sequence belongs to the LolA family. In terms of assembly, monomer.

The protein localises to the periplasm. Participates in the translocation of lipoproteins from the inner membrane to the outer membrane. Only forms a complex with a lipoprotein if the residue after the N-terminal Cys is not an aspartate (The Asp acts as a targeting signal to indicate that the lipoprotein should stay in the inner membrane). The chain is Outer-membrane lipoprotein carrier protein from Enterobacter sp. (strain 638).